We begin with the raw amino-acid sequence, 396 residues long: Polygalacturonase (396 aa).

A signal peptide spans 1–22 (MDLKFKVHFALVLLFLAHFGES). 6 N-linked (GlcNAc...) asparagine glycosylation sites follow: Asn143, Asn151, Asn174, Asn181, Asn203, and Asn208. PbH1 repeat units lie at residues 172 to 198 (CKNL…HVSR) and 199 to 220 (SSSV…SVGD). The active-site Proton donor is Asp213. Residues Cys215 and Cys232 are joined by a disulfide bond. His236 is a catalytic residue. PbH1 repeat units lie at residues 252-273 (VVGV…RIKT), 282-303 (VNDV…VIDQ), and 316-356 (PSQV…EVGD). N-linked (GlcNAc...) asparagine glycosylation is found at Asn259 and Asn294. A disordered region spans residues 364-396 (KEGPAKSSCENIKPSLKGKQNPPVCTASAASSS). Residues Cys372 and Cys388 are joined by a disulfide bond.

Belongs to the glycosyl hydrolase 28 family. In terms of tissue distribution, pollen.

It is found in the secreted. The protein localises to the cell wall. The catalysed reaction is (1,4-alpha-D-galacturonosyl)n+m + H2O = (1,4-alpha-D-galacturonosyl)n + (1,4-alpha-D-galacturonosyl)m.. Its function is as follows. May function in depolymerizing pectin during pollen development, germination, and tube growth. The polypeptide is Polygalacturonase (PG1) (Nicotiana tabacum (Common tobacco)).